We begin with the raw amino-acid sequence, 287 residues long: 2-dehydro-3-deoxyphosphooctonate aldolase (287 aa).

This sequence belongs to the KdsA family.

The protein resides in the cytoplasm. It carries out the reaction D-arabinose 5-phosphate + phosphoenolpyruvate + H2O = 3-deoxy-alpha-D-manno-2-octulosonate-8-phosphate + phosphate. The protein operates within carbohydrate biosynthesis; 3-deoxy-D-manno-octulosonate biosynthesis; 3-deoxy-D-manno-octulosonate from D-ribulose 5-phosphate: step 2/3. It participates in bacterial outer membrane biogenesis; lipopolysaccharide biosynthesis. This chain is 2-dehydro-3-deoxyphosphooctonate aldolase, found in Rhodopseudomonas palustris (strain ATCC BAA-98 / CGA009).